The sequence spans 205 residues: Recombination protein RecR (205 aa).

The C4-type zinc-finger motif lies at 58-73 (CKKCHTISDHELCAIC). One can recognise a Toprim domain in the interval 81-177 (RVVCIVEDIR…KISTIARGIP (97 aa)).

Belongs to the RecR family.

Its function is as follows. May play a role in DNA repair. It seems to be involved in an RecBC-independent recombinational process of DNA repair. It may act with RecF and RecO. The polypeptide is Recombination protein RecR (Cytophaga hutchinsonii (strain ATCC 33406 / DSM 1761 / CIP 103989 / NBRC 15051 / NCIMB 9469 / D465)).